Reading from the N-terminus, the 236-residue chain is Histone H1 (236 aa).

Over residues 1 to 10 the composition is skewed to basic and acidic residues; the sequence is MPPKKTETKA. Disordered stretches follow at residues 1–36 and 94–236; these read MPPK…SPST and KGVF…AEKA. The segment covering 11-36 has biased composition (low complexity); it reads ADASAAAAPAPAAAPTSAPKTKSPST. An H15 domain is found at 36–111; it reads THASYLDMIT…GPSGGTKLAK (76 aa). A compositionally biased stretch (basic residues) spans 109–122; the sequence is LAKKVAKPAPKKAA. Residues 123 to 150 are compositionally biased toward basic and acidic residues; it reads PKKETKEKKPAAAKKEGAAKKETKEKKA. The span at 153–162 shows a compositional bias: low complexity; sequence AKKAAAPKKA. The segment covering 165–174 has biased composition (basic and acidic residues); it reads PKKEVKEKKA. Residues 202–220 are compositionally biased toward low complexity; it reads AKSTAKPAAAKKAAAPKKA. Positions 224-236 are enriched in basic and acidic residues; that stretch reads KKAEKAEPAAEKA.

The protein belongs to the histone H1/H5 family.

It is found in the nucleus. The protein localises to the chromosome. Functionally, could act as an H1-type linker histone. The protein is Histone H1 (hH1) of Neurospora crassa (strain ATCC 24698 / 74-OR23-1A / CBS 708.71 / DSM 1257 / FGSC 987).